A 501-amino-acid chain; its full sequence is Leukocyte receptor cluster member 9 (501 aa).

Disordered regions lie at residues M1–P43, R61–L86, G203–E234, and Q281–A300. The C3H1-type zinc finger occupies P40–A67.

This chain is Leukocyte receptor cluster member 9 (LENG9), found in Homo sapiens (Human).